Reading from the N-terminus, the 113-residue chain is MSTIQNLQSFDPFADATKGDDLLPAGTEDYIHIRIQQRNGRKTLTTVQGIADDYDKKKLVKAFKKKFACNGTVIEHPEYGEVIQLQGDQRKNICQFLLEVGIVKEEQLKVHGF.

An N-acetylserine modification is found at Ser-2. The residue at position 9 (Ser-9) is a Phosphoserine.

Belongs to the SUI1 family.

Its function is as follows. Probably involved in translation. This is Eukaryotic translation initiation factor 1b (EIF1B) from Homo sapiens (Human).